Reading from the N-terminus, the 379-residue chain is Homoserine O-acetyltransferase (379 aa).

Positions 1–24 are disordered; it reads MSHDTTPPLPATGAWREGDPPGDR. Residues 60–365 form the AB hydrolase-1 domain; that stretch reads NAVLVLHALT…ASGHDGFLTE (306 aa). Ser-165 acts as the Nucleophile in catalysis. Arg-236 is a substrate binding site. Active-site residues include Asp-329 and His-359. Asp-360 lines the substrate pocket.

It belongs to the AB hydrolase superfamily. MetX family. In terms of assembly, homodimer.

It localises to the cytoplasm. The catalysed reaction is L-homoserine + acetyl-CoA = O-acetyl-L-homoserine + CoA. It functions in the pathway amino-acid biosynthesis; L-methionine biosynthesis via de novo pathway; O-acetyl-L-homoserine from L-homoserine: step 1/1. Its function is as follows. Transfers an acetyl group from acetyl-CoA to L-homoserine, forming acetyl-L-homoserine. This chain is Homoserine O-acetyltransferase, found in Thermobifida fusca (strain YX).